The sequence spans 384 residues: Tryptophan--tRNA ligase (384 aa).

A 'HIGH' region motif is present at residues Pro-81–His-89. The 'KMSKS' region motif lies at Lys-252–Ser-256.

This sequence belongs to the class-I aminoacyl-tRNA synthetase family.

Its subcellular location is the cytoplasm. The catalysed reaction is tRNA(Trp) + L-tryptophan + ATP = L-tryptophyl-tRNA(Trp) + AMP + diphosphate + H(+). The protein is Tryptophan--tRNA ligase of Thermococcus kodakarensis (strain ATCC BAA-918 / JCM 12380 / KOD1) (Pyrococcus kodakaraensis (strain KOD1)).